Consider the following 171-residue polypeptide: Co-chaperone protein HscB homolog (171 aa).

One can recognise a J domain in the interval 2 to 74; the sequence is NHFELFGLPP…ISRAEYLLSQ (73 aa).

Belongs to the HscB family. As to quaternary structure, interacts with HscA and stimulates its ATPase activity.

Its function is as follows. Co-chaperone involved in the maturation of iron-sulfur cluster-containing proteins. Seems to help targeting proteins to be folded toward HscA. This is Co-chaperone protein HscB homolog from Vibrio vulnificus (strain CMCP6).